A 257-amino-acid polypeptide reads, in one-letter code: Thioredoxin-dependent peroxide reductase, mitochondrial (257 aa).

Residues 1 to 62 (MAATAGRLFR…FAFSTSSSYH (62 aa)) constitute a mitochondrion transit peptide. A Thioredoxin domain is found at 64–222 (PAVTQHAPYF…TLRLVKAFQF (159 aa)). Position 84 is an N6-succinyllysine (lysine 84). N6-acetyllysine; alternate is present on lysine 92. An N6-succinyllysine; alternate modification is found at lysine 92. Residue cysteine 109 is the Cysteine sulfenic acid (-SOH) intermediate of the active site. Threonine 147 is subject to Phosphothreonine.

The protein belongs to the peroxiredoxin family. AhpC/Prx1 subfamily. As to quaternary structure, homodimer; disulfide-linked, upon oxidation. 6 homodimers assemble to form a ring-like dodecamer. Interacts with NEK6. Interacts with LRRK2. Interacts with MAP3K13. Interacts with RPS6KC1 (via PX domain). Post-translationally, phosphorylated by LRRK2; phosphorylation reduces perodixase activity. In terms of processing, the enzyme can be inactivated by further oxidation of the cysteine sulfenic acid (C(P)-SOH) to sulphinic acid (C(P)-SO2H) and sulphonic acid (C(P)-SO3H) instead of its condensation to a disulfide bond. S-palmitoylated. In terms of tissue distribution, predominantly expressed in adrenal cortex. Also detected in liver, renal cortex and medulla, and adrenal medulla (at protein level).

It is found in the mitochondrion matrix. The protein resides in the cytoplasm. The protein localises to the early endosome. It catalyses the reaction a hydroperoxide + [thioredoxin]-dithiol = an alcohol + [thioredoxin]-disulfide + H2O. Functionally, thiol-specific peroxidase that catalyzes the reduction of hydrogen peroxide and organic hydroperoxides to water and alcohols, respectively. Plays a role in cell protection against oxidative stress by detoxifying peroxides. Acts synergistically with MAP3K13 to regulate the activation of NF-kappa-B in the cytosol. Required for the maintenance of physical strength. The protein is Thioredoxin-dependent peroxide reductase, mitochondrial (PRDX3) of Bos taurus (Bovine).